Here is a 156-residue protein sequence, read N- to C-terminus: Peroxisomal membrane associated protein 20 (156 aa).

One can recognise a Thioredoxin domain in the interval 2–156 (VAVGSTLPKV…SSADKVLSSL (155 aa)). The active-site Cysteine sulfenic acid (-SOH) intermediate is the cysteine 43.

Belongs to the peroxiredoxin family. Prx5 subfamily. As to quaternary structure, homodimer; disulfide-linked, upon oxidation.

Its subcellular location is the cytoplasm. The protein localises to the nucleus. In terms of biological role, may act as a chaperone rather than a peroxidase. Has no thioredoxin-dependent peroxidase activity. Shows weak chaperone activity. This Schizosaccharomyces pombe (strain 972 / ATCC 24843) (Fission yeast) protein is Peroxisomal membrane associated protein 20.